A 182-amino-acid polypeptide reads, in one-letter code: Thioredoxin F-type, chloroplastic (182 aa).

Residues 1-69 (MALNLCTSPK…SVRSSLETAG (69 aa)) constitute a chloroplast transit peptide. In terms of domain architecture, Thioredoxin spans 70–181 (PTVTVGKVTE…LVAAIDTVRS (112 aa)). Active-site nucleophile residues include Cys106 and Cys109. Cysteines 106 and 109 form a disulfide.

Belongs to the thioredoxin family. Plant F-type subfamily. In terms of assembly, forms a complex with heterodimeric ferredoxin-thioredoxin reductase (FTR) and ferredoxin.

The protein localises to the plastid. Its subcellular location is the chloroplast. Participates in various redox reactions through the reversible oxidation of the active center dithiol to a disulfide. The F form is known to activate a number of enzymes of the photosynthetic carbon cycle. The polypeptide is Thioredoxin F-type, chloroplastic (Pisum sativum (Garden pea)).